Consider the following 305-residue polypeptide: NDP-polyphosphate phosphotransferase 1 (305 aa).

It belongs to the polyphosphate kinase 2 (PPK2) family. Class I subfamily.

The catalysed reaction is [phosphate](n) + ATP = [phosphate](n+1) + ADP. It carries out the reaction [phosphate](n) + CTP = [phosphate](n+1) + CDP. The enzyme catalyses [phosphate](n) + GTP = [phosphate](n+1) + GDP. It catalyses the reaction [phosphate](n) + UTP = [phosphate](n+1) + UDP. With respect to regulation, shows little dependence on metals. Uses inorganic polyphosphate (polyP) as a donor to convert NDP to NTP. PolyP hydrolysis is slightly faster with GDP, but it can also use ADP, CDP and UDP. The chain is NDP-polyphosphate phosphotransferase 1 from Ruegeria pomeroyi (strain ATCC 700808 / DSM 15171 / DSS-3) (Silicibacter pomeroyi).